The chain runs to 677 residues: MPGFLVRILPLLLVLLLLGPTRGLRNATQRMFEIDYSRDSFLKDGQPFRYISGSIHYSRVPRFYWKDRLLKMKMAGLNAIQTYVPWNFHEPWPGQYQFSEDHDVEYFLRLAHELGLLVILRPGPYICAEWEMGGLPAWLLEKESILLRSSDPDYLAAVDKWLGVLLPKMKPLLYQNGGPVITVQVENEYGSYFACDFDYLRFLQKRFRHHLGDDVVLFTTDGAHKTFLKCGALQGLYTTVDFGTGSNITDAFLSQRKCEPKGPLINSEFYTGWLDHWGQPHSTIKTEAVASSLYDILARGASVNLYMFIGGTNFAYWNGANSPYAAQPTSYDYDAPLSEAGDLTEKYFALRNIIQKFEKVPEGPIPPSTPKFAYGKVTLEKLKTVGAALDILCPSGPIKSLYPLTFIQVKQHYGFVLYRTTLPQDCSNPAPLSSPLNGVHDRAYVAVDGIPQGVLERNNVITLNITGKAGATLDLLVENMGRVNYGAYINDFKGLVSNLTLSSNILTDWTIFPLDTEDAVRSHLGGWGHRDSGHHDEAWAHNSSNYTLPAFYMGNFSIPSGIPDLPQDTFIQFPGWTKGQVWINGFNLGRYWPARGPQLTLFVPQHILMTSAPNTITVLELEWAPCSSDDPELCAVTFVDRPVIGSSVTYDHPSKPVEKRLMPPPPQKNKDSWLDHV.

The N-terminal stretch at 1–23 (MPGFLVRILPLLLVLLLLGPTRG) is a signal peptide. A propeptide spanning residues 24–28 (LRNAT) is cleaved from the precursor. N26 carries N-linked (GlcNAc...) asparagine glycosylation. Residues Y83, E129, and N187 each coordinate substrate. Catalysis depends on E188, which acts as the Proton donor. C195 and C230 are joined by a disulfide. N-linked (GlcNAc...) asparagine glycosylation occurs at N247. The active-site Nucleophile is E268. A substrate-binding site is contributed by Y333. N464, N498, N542, N545, and N555 each carry an N-linked (GlcNAc...) asparagine glycan. The cysteines at positions 626 and 634 are disulfide-linked. Residues 650 to 677 (YDHPSKPVEKRLMPPPPQKNKDSWLDHV) are disordered. Basic and acidic residues-rich tracts occupy residues 652 to 661 (HPSKPVEKRL) and 668 to 677 (KNKDSWLDHV).

It belongs to the glycosyl hydrolase 35 family. Homodimer. May form higher multimers. As to expression, detected in placenta (at protein level). Detected in fibroblasts and testis.

The protein resides in the lysosome. It is found in the cytoplasm. It localises to the perinuclear region. The enzyme catalyses Hydrolysis of terminal non-reducing beta-D-galactose residues in beta-D-galactosides.. Functionally, cleaves beta-linked terminal galactosyl residues from gangliosides, glycoproteins, and glycosaminoglycans. Its function is as follows. Has no beta-galactosidase catalytic activity, but plays functional roles in the formation of extracellular elastic fibers (elastogenesis) and in the development of connective tissue. Seems to be identical to the elastin-binding protein (EBP), a major component of the non-integrin cell surface receptor expressed on fibroblasts, smooth muscle cells, chondroblasts, leukocytes, and certain cancer cell types. In elastin producing cells, associates with tropoelastin intracellularly and functions as a recycling molecular chaperone which facilitates the secretions of tropoelastin and its assembly into elastic fibers. The protein is Beta-galactosidase (GLB1) of Homo sapiens (Human).